Consider the following 504-residue polypeptide: Maturase K (504 aa).

The protein belongs to the intron maturase 2 family. MatK subfamily.

It localises to the plastid. It is found in the chloroplast. Its function is as follows. Usually encoded in the trnK tRNA gene intron. Probably assists in splicing its own and other chloroplast group II introns. This chain is Maturase K, found in Prionotes cerinthoides (Climbing heath).